The chain runs to 310 residues: L-lactate dehydrogenase (310 aa).

Residues V11, D32, and R37 each coordinate NAD(+). Substrate contacts are provided by residues Q79, R85, and 117–120 (NPVD). NAD(+) contacts are provided by residues 115 to 117 (VTN) and T140. Residue 145 to 148 (DTAR) coordinates substrate. 2 residues coordinate beta-D-fructose 1,6-bisphosphate: R150 and H165. H172 acts as the Proton acceptor in catalysis. Y221 is modified (phosphotyrosine). A substrate-binding site is contributed by T230.

Belongs to the LDH/MDH superfamily. LDH family. As to quaternary structure, homotetramer.

The protein localises to the cytoplasm. It catalyses the reaction (S)-lactate + NAD(+) = pyruvate + NADH + H(+). It participates in fermentation; pyruvate fermentation to lactate; (S)-lactate from pyruvate: step 1/1. Allosterically activated by fructose 1,6-bisphosphate (FBP). In terms of biological role, catalyzes the conversion of lactate to pyruvate. The chain is L-lactate dehydrogenase from Fervidobacterium nodosum (strain ATCC 35602 / DSM 5306 / Rt17-B1).